The chain runs to 267 residues: Small ribosomal subunit protein uS2c (267 aa).

The tract at residues 237–267 is disordered; it reads KQKIKKTGVKISGNRRTSSITKKRNPASSKI. The span at 250–267 shows a compositional bias: polar residues; the sequence is NRRTSSITKKRNPASSKI.

It belongs to the universal ribosomal protein uS2 family.

It is found in the plastid. The protein localises to the chloroplast. In Chlorella vulgaris (Green alga), this protein is Small ribosomal subunit protein uS2c (rps2).